The sequence spans 1138 residues: Solute carrier family 12 member 5 (1138 aa).

Disordered stretches follow at residues 1-62 and 96-116; these read MSRR…KGRE and QGSR…KPVQ. The Cytoplasmic portion of the chain corresponds to 1-98; that stretch reads MSRRFTVTSL…ANYTNLPQGS (98 aa). A compositionally biased stretch (basic and acidic residues) spans 21–45; sequence PESRRHSVADPRRLPREDVKGDGNP. The segment covering 46–55 has biased composition (polar residues); that stretch reads KESSPFINST. Threonine 57 is modified (phosphothreonine). Positions 98-111 are enriched in basic and acidic residues; that stretch reads SREHEEAENNEGGK. The chain crosses the membrane as a discontinuously helical span at residues 99 to 120; sequence REHEEAENNEGGKKKPVQAPRM. Lysine 113 serves as a coordination point for K(+). At 121–129 the chain is on the extracellular side; the sequence is GTFMGVYLP. The chain crosses the membrane as a helical span at residues 130 to 151; the sequence is CLQNIFGVILFLRLTWVVGIAG. At 152–174 the chain is on the cytoplasmic side; it reads IMESFCMVFICCSCTMLTAISMS. Residues 175–203 traverse the membrane as a helical segment; that stretch reads AIATNGVVPAGGSYYMISRSLGPEFGGAV. Position 184 (alanine 184) interacts with chloride. At 204–229 the chain is on the extracellular side; it reads GLCFYLGTTFAGAMYILGTIEILLAY. Transmembrane regions (helical) follow at residues 230–250 and 251–276; these read LFPA…AAML and NNMR…KYVN. Residues 277-402 are Extracellular-facing; it reads KFALVFLGCV…ERRGMPSVGL (126 aa). The cysteines at positions 310 and 325 are disulfide-linked. 4 N-linked (GlcNAc...) asparagine glycosylation sites follow: asparagine 314, asparagine 333, asparagine 351, and asparagine 362. Cysteine 345 and cysteine 354 are joined by a disulfide. The helical transmembrane segment at 403–420 threads the bilayer; sequence ADGTPVDMDHPYVFSDMT. Residue methionine 410 participates in K(+) binding. Chloride-binding residues include tyrosine 414 and valine 415. Topologically, residues 421–429 are cytoplasmic; it reads SYFTLLVGI. The helical transmembrane segment at 430 to 453 threads the bilayer; the sequence is YFPSVTGIMAGSNRSGDLRDAQKS. Residue aspartate 446 participates in K(+) binding. The Extracellular segment spans residues 454-485; sequence IPTGTILAIATTSAVYISSVVLFGACIEGVVL. A helical membrane pass occupies residues 486-513; it reads RDKFGEAVNGNLVVGTLAWPSPWVIVIG. Residues 514–534 lie on the Cytoplasmic side of the membrane; it reads SFFSTCGAGLQSLTGAPRLLQ. 2 helical membrane-spanning segments follow: residues 535–555 and 556–578; these read AISR…KANG and EPTW…ASLD. Position 569 (glutamate 569) interacts with chloride. Residues 579 to 592 lie on the Cytoplasmic side of the membrane; that stretch reads EVAPILSMFFLMCY. 2 consecutive transmembrane segments (helical) span residues 593–615 and 616–632; these read MFVN…PRFR and YYHW…CLAL. Topologically, residues 633 to 1138 are cytoplasmic; that stretch reads MFICSWYYAL…GGREVITIYS (506 aa). Residues 667–681 form a scissor helix region; that stretch reads GIRGLSLSAARYALL. The residue at position 929 (threonine 929) is a Phosphothreonine; by OXSR1 and STK39. A disordered region spans residues 943–1051; it reads HLTKNERERE…GPSPVSSEGI (109 aa). Over residues 945-962 the composition is skewed to basic and acidic residues; sequence TKNEREREIQSITDESRG. Residues 982–994 show a composition bias toward acidic residues; the sequence is TACDNEEKPEEEV. Positions 1001–1012 are enriched in low complexity; that stretch reads SAPSCPSSSPSP. Positions 1019 to 1041 are enriched in basic and acidic residues; the sequence is ERETDPEVHLTWTKDKSVAEKNK. Threonine 1029 bears the Phosphothreonine; by OXSR1 and STK39 mark. Residues serine 1044, serine 1047, and serine 1048 each carry the phosphoserine modification.

It belongs to the SLC12A transporter family. K/Cl co-transporter subfamily. In terms of assembly, homodimer; adopts a domain-swap conformation at the scissor helices connecting the transmembrane domain and C-terminal domain. Heterodimer with K-Cl cotransporters SLC12A6 and SLC12A7. Interacts with AP2A1. Phosphorylated at Thr-929 and Thr-1029 by OXSR1/OSR1 and STK39/SPAK downstream of WNK kinases (WNK1, WNK2, WNK3 or WNK4), inhibiting the potassium-chloride cotransport activity. Expressed in brainstem, spinal cord and olfactory bulb of 17 dpc embryos. Expressed in all parts of the brain and spinal cord in postnatal day 14 mice. In terms of tissue distribution, expressed in brainstem and spinal cord of 17 dpc embryos. Expressed in all parts of the brain and spinal cord in postnatal day 14 mice.

The protein localises to the cell membrane. It is found in the cell projection. The protein resides in the dendrite. The enzyme catalyses K(+)(in) + chloride(in) = K(+)(out) + chloride(out). With respect to regulation, inhibited following phosphorylation by OXSR1/OSR1 and STK39/SPAK: phosphorylation takes place downstream of WNK kinases (WNK1, WNK2, WNK3 or WNK4) in response to hyperosmotic stress and subsequent cell shrinkage. Mediates electroneutral potassium-chloride cotransport in mature neurons and is required for neuronal Cl(-) homeostasis. As major extruder of intracellular chloride, it establishes the low neuronal Cl(-) levels required for chloride influx after binding of GABA-A and glycine to their receptors, with subsequent hyperpolarization and neuronal inhibition. Involved in the regulation of dendritic spine formation and maturation. The sequence is that of Solute carrier family 12 member 5 (Slc12a5) from Mus musculus (Mouse).